Consider the following 144-residue polypeptide: Large ribosomal subunit protein uL11 (144 aa).

This sequence belongs to the universal ribosomal protein uL11 family. As to quaternary structure, part of the ribosomal stalk of the 50S ribosomal subunit. Interacts with L10 and the large rRNA to form the base of the stalk. L10 forms an elongated spine to which L12 dimers bind in a sequential fashion forming a multimeric L10(L12)X complex. In terms of processing, one or more lysine residues are methylated.

In terms of biological role, forms part of the ribosomal stalk which helps the ribosome interact with GTP-bound translation factors. This chain is Large ribosomal subunit protein uL11, found in Corynebacterium efficiens (strain DSM 44549 / YS-314 / AJ 12310 / JCM 11189 / NBRC 100395).